A 301-amino-acid polypeptide reads, in one-letter code: Ornithine carbamoyltransferase (301 aa).

Carbamoyl phosphate is bound by residues 47–50 (STRT), Q74, R98, and 125–128 (HPMQ). L-ornithine contacts are provided by residues N156, D220, and 224–225 (SM). Residues 260–261 (CL) and R288 contribute to the carbamoyl phosphate site.

Belongs to the aspartate/ornithine carbamoyltransferase superfamily. OTCase family.

The protein resides in the cytoplasm. The enzyme catalyses carbamoyl phosphate + L-ornithine = L-citrulline + phosphate + H(+). Its pathway is amino-acid biosynthesis; L-arginine biosynthesis; L-arginine from L-ornithine and carbamoyl phosphate: step 1/3. Functionally, reversibly catalyzes the transfer of the carbamoyl group from carbamoyl phosphate (CP) to the N(epsilon) atom of ornithine (ORN) to produce L-citrulline. This is Ornithine carbamoyltransferase from Picrophilus torridus (strain ATCC 700027 / DSM 9790 / JCM 10055 / NBRC 100828 / KAW 2/3).